Reading from the N-terminus, the 675-residue chain is Alpha-1,4-glucan:maltose-1-phosphate maltosyltransferase (675 aa).

Residues K256, Q316, and D351 each contribute to the alpha-maltose 1-phosphate site. D386 functions as the Nucleophile in the catalytic mechanism. N387 is an alpha-maltose 1-phosphate binding site. The Proton donor role is filled by E415. 525 to 526 (KY) is an alpha-maltose 1-phosphate binding site.

Belongs to the glycosyl hydrolase 13 family. GlgE subfamily. As to quaternary structure, homodimer.

It catalyses the reaction alpha-maltose 1-phosphate + [(1-&gt;4)-alpha-D-glucosyl](n) = [(1-&gt;4)-alpha-D-glucosyl](n+2) + phosphate. In terms of biological role, maltosyltransferase that uses maltose 1-phosphate (M1P) as the sugar donor to elongate linear or branched alpha-(1-&gt;4)-glucans. Is involved in a branched alpha-glucan biosynthetic pathway from trehalose, together with TreS, Mak and GlgB. The chain is Alpha-1,4-glucan:maltose-1-phosphate maltosyltransferase from Corynebacterium glutamicum (strain ATCC 13032 / DSM 20300 / JCM 1318 / BCRC 11384 / CCUG 27702 / LMG 3730 / NBRC 12168 / NCIMB 10025 / NRRL B-2784 / 534).